The sequence spans 152 residues: Ribosome maturation factor RimP (152 aa).

The protein belongs to the RimP family.

It is found in the cytoplasm. Functionally, required for maturation of 30S ribosomal subunits. This chain is Ribosome maturation factor RimP, found in Desulfatibacillum aliphaticivorans.